Reading from the N-terminus, the 154-residue chain is Thioredoxin-like protein CXXS2 (154 aa).

The Thioredoxin domain maps to 23-148 (RRNKTQARSQ…LQKKTAAAAN (126 aa)). At serine 31 the chain carries Phosphoserine.

Belongs to the thioredoxin family. In terms of tissue distribution, ubiquitous.

It is found in the cytoplasm. In terms of biological role, possesses low disulfide reductase activity, but efficient protein disulfide isomerase activity. Does not possess deglutathionylation activity. The protein is Thioredoxin-like protein CXXS2 (CXXS2) of Arabidopsis thaliana (Mouse-ear cress).